The primary structure comprises 524 residues: Cytochrome P450 1A1 (524 aa).

The interval 33-44 is mitochondrial targeting signal; that stretch reads WQPRLPKGLKSP. Ser-71 carries an O-linked (GlcNAc) serine glycan. Substrate is bound at residue Phe-228. Cys-461 contributes to the heme binding site.

This sequence belongs to the cytochrome P450 family. As to quaternary structure, interacts with cytosolic chaperones HSP70 and HSP90; this interaction is required for initial targeting to mitochondria. Interacts (via mitochondrial targeting signal) with TOMM40 (via N-terminus); this interaction is required for translocation across the mitochondrial outer membrane. Requires heme as cofactor.

It localises to the endoplasmic reticulum membrane. The protein resides in the mitochondrion inner membrane. It is found in the microsome membrane. Its subcellular location is the cytoplasm. The enzyme catalyses an organic molecule + reduced [NADPH--hemoprotein reductase] + O2 = an alcohol + oxidized [NADPH--hemoprotein reductase] + H2O + H(+). The catalysed reaction is estrone + reduced [NADPH--hemoprotein reductase] + O2 = 2-hydroxyestrone + oxidized [NADPH--hemoprotein reductase] + H2O + H(+). It carries out the reaction estrone + reduced [NADPH--hemoprotein reductase] + O2 = 4-hydroxyestrone + oxidized [NADPH--hemoprotein reductase] + H2O + H(+). It catalyses the reaction estrone + reduced [NADPH--hemoprotein reductase] + O2 = 6alpha-hydroxyestrone + oxidized [NADPH--hemoprotein reductase] + H2O + H(+). The enzyme catalyses estrone + reduced [NADPH--hemoprotein reductase] + O2 = 15alpha-hydroxyestrone + oxidized [NADPH--hemoprotein reductase] + H2O + H(+). The catalysed reaction is estrone + reduced [NADPH--hemoprotein reductase] + O2 = 16alpha-hydroxyestrone + oxidized [NADPH--hemoprotein reductase] + H2O + H(+). It carries out the reaction 17beta-estradiol + reduced [NADPH--hemoprotein reductase] + O2 = 2-hydroxy-17beta-estradiol + oxidized [NADPH--hemoprotein reductase] + H2O + H(+). It catalyses the reaction 17beta-estradiol + reduced [NADPH--hemoprotein reductase] + O2 = 4-hydroxy-17beta-estradiol + oxidized [NADPH--hemoprotein reductase] + H2O + H(+). The enzyme catalyses 17beta-estradiol + reduced [NADPH--hemoprotein reductase] + O2 = 6alpha-hydroxy-17beta-estradiol + oxidized [NADPH--hemoprotein reductase] + H2O + H(+). The catalysed reaction is 17beta-estradiol + reduced [NADPH--hemoprotein reductase] + O2 = 7alpha-hydroxy-17beta-estradiol + oxidized [NADPH--hemoprotein reductase] + H2O + H(+). It carries out the reaction 17beta-estradiol + reduced [NADPH--hemoprotein reductase] + O2 = 15alpha-hydroxy-17beta-estradiol + oxidized [NADPH--hemoprotein reductase] + H2O + H(+). It catalyses the reaction (5Z,8Z,11Z)-eicosatrienoate + reduced [NADPH--hemoprotein reductase] + O2 = 19-hydroxy-(5Z,8Z,11Z)-eicosatrienoate + oxidized [NADPH--hemoprotein reductase] + H2O + H(+). The enzyme catalyses (5Z,8Z,11Z,14Z)-eicosatetraenoate + reduced [NADPH--hemoprotein reductase] + O2 = 16-hydroxy-(5Z,8Z,11Z,14Z)-eicosatetraenoate + oxidized [NADPH--hemoprotein reductase] + H2O + H(+). The catalysed reaction is (5Z,8Z,11Z,14Z)-eicosatetraenoate + reduced [NADPH--hemoprotein reductase] + O2 = 17-hydroxy-(5Z,8Z,11Z,14Z)-eicosatetraenoate + oxidized [NADPH--hemoprotein reductase] + H2O + H(+). It carries out the reaction (5Z,8Z,11Z,14Z)-eicosatetraenoate + reduced [NADPH--hemoprotein reductase] + O2 = 18-hydroxy-(5Z,8Z,11Z,14Z)-eicosatetraenoate + oxidized [NADPH--hemoprotein reductase] + H2O + H(+). It catalyses the reaction (5Z,8Z,11Z,14Z)-eicosatetraenoate + reduced [NADPH--hemoprotein reductase] + O2 = 19-hydroxy-(5Z,8Z,11Z,14Z)-eicosatetraenoate + oxidized [NADPH--hemoprotein reductase] + H2O + H(+). The enzyme catalyses (5Z,8Z,11Z,14Z,17Z)-eicosapentaenoate + reduced [NADPH--hemoprotein reductase] + O2 = 19-hydroxy-(5Z,8Z,11Z,14Z,17Z)-eicosapentaenoate + oxidized [NADPH--hemoprotein reductase] + H2O + H(+). The catalysed reaction is (5Z,8Z,11Z,14Z)-eicosatetraenoate + reduced [NADPH--hemoprotein reductase] + O2 = (8R,9S)-epoxy-(5Z,11Z,14Z)-eicosatrienoate + oxidized [NADPH--hemoprotein reductase] + H2O + H(+). It carries out the reaction (5Z,8Z,11Z,14Z)-eicosatetraenoate + reduced [NADPH--hemoprotein reductase] + O2 = (11R,12S)-epoxy-(5Z,8Z,14Z)-eicosatrienoate + oxidized [NADPH--hemoprotein reductase] + H2O + H(+). It catalyses the reaction (5Z,8Z,11Z,14Z)-eicosatetraenoate + reduced [NADPH--hemoprotein reductase] + O2 = (14S,15R)-epoxy-(5Z,8Z,11Z)-eicosatrienoate + oxidized [NADPH--hemoprotein reductase] + H2O + H(+). The enzyme catalyses (5Z,8Z,11Z,14Z)-eicosatetraenoate + reduced [NADPH--hemoprotein reductase] + O2 = (14R,15S)-epoxy-(5Z,8Z,11Z)-eicosatrienoate + oxidized [NADPH--hemoprotein reductase] + H2O + H(+). The catalysed reaction is (5Z,8Z,11Z,14Z,17Z)-eicosapentaenoate + reduced [NADPH--hemoprotein reductase] + O2 = (17R,18S)-epoxy-(5Z,8Z,11Z,14Z)-eicosatetraenoate + oxidized [NADPH--hemoprotein reductase] + H2O + H(+). It carries out the reaction (4Z,7Z,10Z,13Z,16Z,19Z)-docosahexaenoate + reduced [NADPH--hemoprotein reductase] + O2 = (19S,20R)-epoxy-(4Z,7Z,10Z,13Z,16Z)-docosapentaenoate + oxidized [NADPH--hemoprotein reductase] + H2O + H(+). It catalyses the reaction (4Z,7Z,10Z,13Z,16Z,19Z)-docosahexaenoate + reduced [NADPH--hemoprotein reductase] + O2 = (19R,20S)-epoxy-(4Z,7Z,10Z,13Z,16Z)-docosapentaenoate + oxidized [NADPH--hemoprotein reductase] + H2O + H(+). The enzyme catalyses all-trans-retinol + reduced [NADPH--hemoprotein reductase] + O2 = all-trans-retinal + oxidized [NADPH--hemoprotein reductase] + 2 H2O + H(+). The catalysed reaction is all-trans-retinal + reduced [NADPH--hemoprotein reductase] + O2 = all-trans-retinoate + oxidized [NADPH--hemoprotein reductase] + H2O + 2 H(+). It carries out the reaction (13S)-hydroperoxy-(9Z,11E)-octadecadienoate = 13-oxo-(9Z,11E)-octadecadienoate + H2O. It catalyses the reaction (12S)-hydroperoxy-(5Z,8Z,10E,14Z)-eicosatetraenoate = 12-oxo-(5Z,8Z,10E,14Z)-eicosatetraenoate + H2O. The enzyme catalyses (15S)-hydroperoxy-(5Z,8Z,11Z,13E)-eicosatetraenoate = 15-oxo-(5Z,8Z,11Z,13E)-eicosatetraenoate + H2O. The catalysed reaction is (5S)-hydroperoxy-(6E,8Z,11Z,14Z)-eicosatetraenoate = 5-oxo-(6E,8Z,11Z,14Z)-eicosatetraenoate + H2O. The protein operates within steroid hormone biosynthesis. It participates in lipid metabolism; fatty acid metabolism. Its pathway is cofactor metabolism; retinol metabolism. A cytochrome P450 monooxygenase involved in the metabolism of various endogenous substrates, including fatty acids, steroid hormones and vitamins. Mechanistically, uses molecular oxygen inserting one oxygen atom into a substrate, and reducing the second into a water molecule, with two electrons provided by NADPH via cytochrome P450 reductase (CPR; NADPH-ferrihemoprotein reductase). Catalyzes the hydroxylation of carbon-hydrogen bonds. Exhibits high catalytic activity for the formation of hydroxyestrogens from estrone (E1) and 17beta-estradiol (E2), namely 2-hydroxy E1 and E2, as well as D-ring hydroxylated E1 and E2 at the C15alpha and C16alpha positions. Displays different regioselectivities for polyunsaturated fatty acids (PUFA) hydroxylation. Catalyzes the epoxidation of double bonds of certain PUFA. Converts arachidonic acid toward epoxyeicosatrienoic acid (EET) regioisomers, 8,9-, 11,12-, and 14,15-EET, that function as lipid mediators in the vascular system. Displays an absolute stereoselectivity in the epoxidation of eicosapentaenoic acid (EPA) producing the 17(R),18(S) enantiomer. May play an important role in all-trans retinoic acid biosynthesis in extrahepatic tissues. Catalyzes two successive oxidative transformation of all-trans retinol to all-trans retinal and then to the active form all-trans retinoic acid. May also participate in eicosanoids metabolism by converting hydroperoxide species into oxo metabolites (lipoxygenase-like reaction, NADPH-independent). The sequence is that of Cytochrome P450 1A1 (CYP1A1) from Canis lupus familiaris (Dog).